The following is a 643-amino-acid chain: Galactan 5-O-arabinofuranosyltransferase (643 aa).

13 helical membrane-spanning segments follow: residues 25–45 (VLVA…VAVV), 66–86 (ALTT…GWLW), 97–117 (LGGL…PLGA), 180–200 (FKPW…VLWW), 205–225 (FEYA…YSSP), 229–249 (AAMI…GLGA), 255–272 (WAAV…ATWY), 276–293 (VAYG…LAGS), 309–329 (LAVV…PYLL), 355–375 (FPML…LWLV), 384–404 (AGAL…SMLA), 420–440 (LSVL…QALG), and 445–465 (GVIP…SQDI). Topologically, residues 466–643 (PDVLRPDLTI…LAIRKPQESA (178 aa)) are extracellular.

This sequence belongs to the glycosyltransferase 85 family.

The protein localises to the cell membrane. The enzyme catalyses Adds an alpha-D-arabinofuranosyl group from trans,octacis-decaprenylphospho-beta-D-arabinofuranose at the 5-O-position of the eighth, tenth and twelfth galactofuranose unit of the galactofuranan chain of [beta-D-galactofuranosyl-(1-&gt;5)-beta-D-galactofuranosyl-(1-&gt;6)]14-beta-D-galactofuranosyl-(1-&gt;5)-beta-D-galactofuranosyl-(1-&gt;4)-alpha-L-rhamnopyranosyl-(1-&gt;3)-N-acetyl-alpha-D-glucosaminyl-diphospho-trans,octacis-decaprenol.. It participates in cell wall biogenesis; cell wall polysaccharide biosynthesis. Involved in the biosynthesis of the arabinogalactan (AG) region of the mycolylarabinogalactan-peptidoglycan (mAGP) complex, an essential component of the mycobacterial cell wall. Catalyzes the addition of the first key arabinofuranosyl (Araf) residue from the sugar donor decaprenyl-phospho-arabinose (DPA) on the C-5 of a 6-linked galactofuranosyl (Galf) of the galactan domain, thus 'priming' the galactan for further elaboration by other arabinofuranosyltransferases. It is not able to add an Araf residue to a terminal Galf. The protein is Galactan 5-O-arabinofuranosyltransferase of Mycobacterium tuberculosis (strain CDC 1551 / Oshkosh).